Here is a 256-residue protein sequence, read N- to C-terminus: Pyrroloquinoline-quinone synthase (256 aa).

It belongs to the PqqC family.

It catalyses the reaction 6-(2-amino-2-carboxyethyl)-7,8-dioxo-1,2,3,4,7,8-hexahydroquinoline-2,4-dicarboxylate + 3 O2 = pyrroloquinoline quinone + 2 H2O2 + 2 H2O + H(+). It functions in the pathway cofactor biosynthesis; pyrroloquinoline quinone biosynthesis. Ring cyclization and eight-electron oxidation of 3a-(2-amino-2-carboxyethyl)-4,5-dioxo-4,5,6,7,8,9-hexahydroquinoline-7,9-dicarboxylic-acid to PQQ. This chain is Pyrroloquinoline-quinone synthase, found in Rhizobium meliloti (strain 1021) (Ensifer meliloti).